A 157-amino-acid polypeptide reads, in one-letter code: Protein-export protein SecB (157 aa).

Belongs to the SecB family. In terms of assembly, homotetramer, a dimer of dimers. One homotetramer interacts with 1 SecA dimer.

It is found in the cytoplasm. Its function is as follows. One of the proteins required for the normal export of preproteins out of the cell cytoplasm. It is a molecular chaperone that binds to a subset of precursor proteins, maintaining them in a translocation-competent state. It also specifically binds to its receptor SecA. In Shewanella oneidensis (strain ATCC 700550 / JCM 31522 / CIP 106686 / LMG 19005 / NCIMB 14063 / MR-1), this protein is Protein-export protein SecB.